Consider the following 340-residue polypeptide: Dihydroorotate dehydrogenase (quinone) (340 aa).

FMN is bound by residues 63–67 (AGLDK) and Thr-87. Lys-67 is a substrate binding site. 112 to 116 (NRMGF) is a binding site for substrate. FMN is bound by residues Asn-140 and Asn-173. A substrate-binding site is contributed by Asn-173. Catalysis depends on Ser-176, which acts as the Nucleophile. Asn-178 provides a ligand contact to substrate. 2 residues coordinate FMN: Lys-218 and Thr-246. 247 to 248 (NT) provides a ligand contact to substrate. FMN-binding positions include Gly-269, Gly-298, and 319–320 (YT).

It belongs to the dihydroorotate dehydrogenase family. Type 2 subfamily. In terms of assembly, monomer. FMN is required as a cofactor.

The protein resides in the cell membrane. It catalyses the reaction (S)-dihydroorotate + a quinone = orotate + a quinol. Its pathway is pyrimidine metabolism; UMP biosynthesis via de novo pathway; orotate from (S)-dihydroorotate (quinone route): step 1/1. Catalyzes the conversion of dihydroorotate to orotate with quinone as electron acceptor. The polypeptide is Dihydroorotate dehydrogenase (quinone) (Methylococcus capsulatus (strain ATCC 33009 / NCIMB 11132 / Bath)).